Here is a 329-residue protein sequence, read N- to C-terminus: Malate dehydrogenase (329 aa).

Gly12–Gly18 is an NAD(+) binding site. The substrate site is built by Arg93 and Arg99. Residues Asn106, Gln113, and Thr130 to Asn132 contribute to the NAD(+) site. The substrate site is built by Asn132 and Arg163. The active-site Proton acceptor is the His188.

This sequence belongs to the LDH/MDH superfamily. MDH type 2 family.

The enzyme catalyses (S)-malate + NAD(+) = oxaloacetate + NADH + H(+). Functionally, catalyzes the reversible oxidation of malate to oxaloacetate. The sequence is that of Malate dehydrogenase from Mycobacterium ulcerans (strain Agy99).